Here is a 273-residue protein sequence, read N- to C-terminus: Undecaprenyl-diphosphatase (273 aa).

Transmembrane regions (helical) follow at residues 6 to 26, 45 to 65, 90 to 110, 116 to 136, 190 to 210, 222 to 242, and 252 to 272; these read SLLI…LPVS, AKTF…VMFW, LTLI…LVFH, LFNP…LIAA, YAAS…ATVL, ADIP…LIAI, and ISFI…YVVF.

Belongs to the UppP family.

The protein localises to the cell inner membrane. It carries out the reaction di-trans,octa-cis-undecaprenyl diphosphate + H2O = di-trans,octa-cis-undecaprenyl phosphate + phosphate + H(+). Functionally, catalyzes the dephosphorylation of undecaprenyl diphosphate (UPP). Confers resistance to bacitracin. This is Undecaprenyl-diphosphatase from Salmonella heidelberg (strain SL476).